Reading from the N-terminus, the 229-residue chain is MNDHVIYTQSDVGLNQFFAKIYSLVGMGVGLSAFVSYLMLYPFRENLISILVNQPMIYYGAAIIELILVFVASGAARKNTPAALPIFLIYSALNGFTLSFIIVAYAQTTVFQAFLSSAAVFFAMSIIGVKTKRDMSGLRKAMFAALIGVVVASLINLFIGSGMMSYVISVISVLIFSGLIASDNQMIKRVYQATNGQVGDGWAVAMALSLYLDFINLFISLLRIFGRND.

7 helical membrane-spanning segments follow: residues 21–41 (IYSLVGMGVGLSAFVSYLMLY), 56–76 (MIYYGAAIIELILVFVASGAA), 83–103 (ALPIFLIYSALNGFTLSFIIV), 109–129 (TVFQAFLSSAAVFFAMSIIGV), 141–161 (AMFAALIGVVVASLINLFIGS), 162–182 (GMMSYVISVISVLIFSGLIAS), and 202–222 (WAVAMALSLYLDFINLFISLL).

Belongs to the BI1 family.

The protein resides in the cell membrane. This is an uncharacterized protein from Streptococcus pyogenes serotype M6 (strain ATCC BAA-946 / MGAS10394).